Here is a 122-residue protein sequence, read N- to C-terminus: MIQRGTYLNTADNSGAKLVQCIGIPGGAKKMHATVGDVITVTVKSAIPSGTAKKGKVYKAVVVRTKKEVARPDGSYVKADDNAVVLLNNQLEPIGTRILGPVCRELRSKGFYRIVSLAPEVI.

This sequence belongs to the universal ribosomal protein uL14 family. Part of the 50S ribosomal subunit. Forms a cluster with proteins L3 and L19. In the 70S ribosome, L14 and L19 interact and together make contacts with the 16S rRNA in bridges B5 and B8.

Its function is as follows. Binds to 23S rRNA. Forms part of two intersubunit bridges in the 70S ribosome. This Sulfurihydrogenibium sp. (strain YO3AOP1) protein is Large ribosomal subunit protein uL14.